A 404-amino-acid chain; its full sequence is Cysteine desulfurase IscS (404 aa).

Pyridoxal 5'-phosphate-binding positions include 75–76 (AT), Asn-155, Gln-183, and 203–205 (SGH). Lys-206 carries the post-translational modification N6-(pyridoxal phosphate)lysine. Thr-243 contacts pyridoxal 5'-phosphate. Cys-328 functions as the Cysteine persulfide intermediate in the catalytic mechanism. Position 328 (Cys-328) interacts with [2Fe-2S] cluster.

It belongs to the class-V pyridoxal-phosphate-dependent aminotransferase family. NifS/IscS subfamily. Homodimer. Forms a heterotetramer with IscU, interacts with other sulfur acceptors. The cofactor is pyridoxal 5'-phosphate.

Its subcellular location is the cytoplasm. It catalyses the reaction (sulfur carrier)-H + L-cysteine = (sulfur carrier)-SH + L-alanine. Its pathway is cofactor biosynthesis; iron-sulfur cluster biosynthesis. In terms of biological role, master enzyme that delivers sulfur to a number of partners involved in Fe-S cluster assembly, tRNA modification or cofactor biosynthesis. Catalyzes the removal of elemental sulfur atoms from cysteine to produce alanine. Functions as a sulfur delivery protein for Fe-S cluster synthesis onto IscU, an Fe-S scaffold assembly protein, as well as other S acceptor proteins. In Mannheimia succiniciproducens (strain KCTC 0769BP / MBEL55E), this protein is Cysteine desulfurase IscS.